The primary structure comprises 471 residues: Ubiquitin-conjugating enzyme E2 variant 3 (471 aa).

Residues Glu-2–Ser-145 enclose the UEV domain. NAD(+) is bound at residue Gly-191–Thr-219.

This sequence in the N-terminal section; belongs to the ubiquitin-conjugating enzyme family. UEV subfamily. In the C-terminal section; belongs to the LDH/MDH superfamily. As to quaternary structure, homodimer. Colon, colon carcinoma cell lines, normal cervical epithelium, carcinomas of the uterine cervix and peripheral blood leukocytes.

In terms of biological role, possible negative regulator of polyubiquitination. In Homo sapiens (Human), this protein is Ubiquitin-conjugating enzyme E2 variant 3.